The primary structure comprises 223 residues: Endonuclease NucS (223 aa).

This sequence belongs to the NucS endonuclease family.

The protein localises to the cytoplasm. Its function is as follows. Cleaves both 3' and 5' ssDNA extremities of branched DNA structures. In Streptomyces avermitilis (strain ATCC 31267 / DSM 46492 / JCM 5070 / NBRC 14893 / NCIMB 12804 / NRRL 8165 / MA-4680), this protein is Endonuclease NucS.